The primary structure comprises 118 residues: Large ribosomal subunit protein bL20 (118 aa).

This sequence belongs to the bacterial ribosomal protein bL20 family.

In terms of biological role, binds directly to 23S ribosomal RNA and is necessary for the in vitro assembly process of the 50S ribosomal subunit. It is not involved in the protein synthesizing functions of that subunit. In Thermosipho melanesiensis (strain DSM 12029 / CIP 104789 / BI429), this protein is Large ribosomal subunit protein bL20.